Here is a 203-residue protein sequence, read N- to C-terminus: MDAGKAERRAGNGRRTDGRRHLVVAAACAAFIAAMVGVTYASVPLYAMFCALTGFGGATRVGAAPTSAPIEREITIRFDANVAPGLPWAFAPVERDVTVKVGATSLAHYTAANRSSMETHANATYNVSPPQAGAYFVKLQCFCFDEQTLAPNEKLEMPVVFYVDPAIAQDPDLKTLTDITLSYTFFPAKTPDKAAARASGTGG.

Topologically, residues 1–19 (MDAGKAERRAGNGRRTDGR) are cytoplasmic. Residues 20–42 (RHLVVAAACAAFIAAMVGVTYAS) traverse the membrane as a helical; Signal-anchor for type II membrane protein segment. At 43–203 (VPLYAMFCAL…AAARASGTGG (161 aa)) the chain is on the periplasmic side.

Belongs to the COX11/CtaG family.

It is found in the cell inner membrane. Exerts its effect at some terminal stage of cytochrome c oxidase synthesis, probably by being involved in the insertion of the copper B into subunit I. The protein is Cytochrome c oxidase assembly protein CtaG of Xanthobacter autotrophicus (strain ATCC BAA-1158 / Py2).